The sequence spans 194 residues: Oligoribonuclease (194 aa).

The 164-residue stretch at 11-174 folds into the Exonuclease domain; sequence LIWIDLEMTG…SDVRDSIDEL (164 aa). Y132 is an active-site residue.

This sequence belongs to the oligoribonuclease family.

Its subcellular location is the cytoplasm. In terms of biological role, 3'-to-5' exoribonuclease specific for small oligoribonucleotides. In Xanthomonas axonopodis pv. citri (strain 306), this protein is Oligoribonuclease.